The sequence spans 1300 residues: DNA-directed RNA polymerase subunit beta (1300 aa).

This sequence belongs to the RNA polymerase beta chain family. The RNAP catalytic core consists of 2 alpha, 1 beta, 1 beta' and 1 omega subunit. When a sigma factor is associated with the core the holoenzyme is formed, which can initiate transcription.

The enzyme catalyses RNA(n) + a ribonucleoside 5'-triphosphate = RNA(n+1) + diphosphate. Functionally, DNA-dependent RNA polymerase catalyzes the transcription of DNA into RNA using the four ribonucleoside triphosphates as substrates. This chain is DNA-directed RNA polymerase subunit beta, found in Chlorobium chlorochromatii (strain CaD3).